We begin with the raw amino-acid sequence, 311 residues long: Methionyl-tRNA formyltransferase (311 aa).

Residue 110–113 coordinates (6S)-5,6,7,8-tetrahydrofolate; the sequence is SLLP.

This sequence belongs to the Fmt family.

The catalysed reaction is L-methionyl-tRNA(fMet) + (6R)-10-formyltetrahydrofolate = N-formyl-L-methionyl-tRNA(fMet) + (6S)-5,6,7,8-tetrahydrofolate + H(+). Functionally, attaches a formyl group to the free amino group of methionyl-tRNA(fMet). The formyl group appears to play a dual role in the initiator identity of N-formylmethionyl-tRNA by promoting its recognition by IF2 and preventing the misappropriation of this tRNA by the elongation apparatus. The protein is Methionyl-tRNA formyltransferase of Sulfurihydrogenibium sp. (strain YO3AOP1).